The sequence spans 325 residues: Putative gluconeogenesis factor (325 aa).

The protein belongs to the gluconeogenesis factor family.

Its subcellular location is the cytoplasm. Functionally, required for morphogenesis under gluconeogenic growth conditions. The polypeptide is Putative gluconeogenesis factor (Streptococcus pneumoniae serotype 4 (strain ATCC BAA-334 / TIGR4)).